Reading from the N-terminus, the 482-residue chain is uncharacterized protein (482 aa).

The region spanning 231 to 459 (FEGNAGFYEI…FDACNHYLID (229 aa)) is the AB hydrolase-1 domain.

This is an uncharacterized protein from Caenorhabditis elegans.